Consider the following 324-residue polypeptide: MANMFALILVIATLVTGILWCVDKFVFAPKRRARQAAAQTASGDALDNATLNKVAPKPGWLETGASVFPVLAIVLIVRSFLYEPFQIPSGSMMPTLLIGDFILVEKFAYGIKDPIYQKTLIETGHPKRGDIVVFKYPEDPKLDYIKRAVGLPGDKITYDPVAKEVTIQPGCSSGQACENALPVTYSNVEPSDFVQTFARRNGGEATSGFFEVPLNETKENGIRLTERKETLGDVTHRILMVPIAQDQLGMYYQQPGQPLATWVVPPGQYFMMGDNRDNSADSRYWGFVPEANLVGKAVAIWMSFDKQEGEWPTGVRLSRIGGIH.

Topologically, residues 1–3 are periplasmic; that stretch reads MAN. A helical transmembrane segment spans residues 4 to 22; sequence MFALILVIATLVTGILWCV. The Cytoplasmic portion of the chain corresponds to 23-58; sequence DKFVFAPKRRARQAAAQTASGDALDNATLNKVAPKP. A helical transmembrane segment spans residues 59–77; the sequence is GWLETGASVFPVLAIVLIV. Topologically, residues 78-324 are periplasmic; it reads RSFLYEPFQI…VRLSRIGGIH (247 aa). Active-site residues include serine 91 and lysine 146.

This sequence belongs to the peptidase S26 family.

The protein resides in the cell inner membrane. It catalyses the reaction Cleavage of hydrophobic, N-terminal signal or leader sequences from secreted and periplasmic proteins.. This chain is Signal peptidase I (lepB), found in Salmonella typhi.